A 60-amino-acid chain; its full sequence is UPF0434 protein Ent638_1436 (60 aa).

Belongs to the UPF0434 family.

In Enterobacter sp. (strain 638), this protein is UPF0434 protein Ent638_1436.